The chain runs to 238 residues: Thymidine kinase, cytosolic (238 aa).

An N-acetylserine modification is found at serine 2. Serine 2 and serine 13 each carry phosphoserine. Residues 26–33, 58–60, and 97–100 each bind ATP; these read GPMFSGKS, DTR, and DEGQ. Glutamate 98 serves as the catalytic Proton acceptor. Phenylalanine 128 is a binding site for substrate. Cysteine 153 and cysteine 156 together coordinate Zn(2+). Substrate is bound by residues 172-176 and tyrosine 181; that span reads VEVIG. Positions 185 and 188 each coordinate Zn(2+). Positions 206 to 208 match the KEN box motif; the sequence is KEN. Serine 235 is subject to Phosphoserine.

Belongs to the thymidine kinase family. As to quaternary structure, homotetramer. Tetramerization from dimerization is induced by ATP and increases catalytic efficiency due to a high affinity for thymidine. Tetramerization is inhibited by phosphorylation at Ser-13. Interacts (via the KEN box) with FZR1. In terms of processing, phosphorylated on Ser-13 in mitosis. Phosphorylation of Ser-13 by CDK1 during mitosis reduces homotetramerization and catalytic efficiency when DNA replication is complete and intracellular TK1 is still present at a high level. Post-translationally, polyubiquitinated. Postmitosis, ubiquitination leads to proteasomal degradation. The KEN box sequence located at the C-terminal region targets for degradation by the anaphase promoting complex (APC/C) activated and rate-limited by FZR1.

It localises to the cytoplasm. The catalysed reaction is thymidine + ATP = dTMP + ADP + H(+). Functionally, cell-cycle-regulated enzyme of importance in nucleotide metabolism. Catalyzes the first enzymatic step in the salvage pathway converting thymidine into thymidine monophosphate. Transcriptional regulation limits expression to the S phase of the cell cycle and transient expression coincides with the oscillation in the intracellular dTTP concentration. This chain is Thymidine kinase, cytosolic (TK1), found in Bos taurus (Bovine).